The primary structure comprises 526 residues: TBC1 domain family member 19 (526 aa).

In terms of domain architecture, Rab-GAP TBC spans 251–472; sequence GSPTALRAEL…LLWDRILGYN (222 aa).

Its function is as follows. May act as a GTPase-activating protein for Rab family protein(s). This is TBC1 domain family member 19 (TBC1D19) from Homo sapiens (Human).